Reading from the N-terminus, the 309-residue chain is Oxidoreductase NAD-binding domain-containing protein 1 (309 aa).

Positions 1 to 14 are cleaved as a signal peptide; that stretch reads MVVVIPRLLRGSLG. Residues 47–161 form the FAD-binding FR-type domain; it reads HLERTADVVR…VGGEFFFDPK (115 aa). 175–180 provides a ligand contact to NAD(+); it reads GVGINP.

The polypeptide is Oxidoreductase NAD-binding domain-containing protein 1 (OXNAD1) (Bos taurus (Bovine)).